An 893-amino-acid polypeptide reads, in one-letter code: UPF0182 protein CLM_0018 (893 aa).

Transmembrane regions (helical) follow at residues I9–I29, A49–Y69, L94–Y114, V154–E174, L202–W222, F246–V266, and V273–L293.

The protein belongs to the UPF0182 family.

The protein resides in the cell membrane. This is UPF0182 protein CLM_0018 from Clostridium botulinum (strain Kyoto / Type A2).